The chain runs to 443 residues: MATAASNPYLASSSILSSGSIVHSDSGGGMQQGSAAVTSVSGGYRGDPTVKMVQSDFMQGAMAASNGGHMLSHAHQWVTSLPHAAAAAAAAAVAAAEAGSPWSSSPVGMTGSPQQQDVKNNSGRDDLHSGTALHHRAPHLGPHQTHAGAWGSTTAAHIPSLTGSQQQQQSLIYSQPGGFTVNGMLSPPGSQSLVHPGLVRGDTPELDHSSHHHHHHHQHQHHQQAHHGVNSHDPHSDEDTPTSDDLEHFAKQFKQRRIKLGFTQADVGLALGTLYGNVFSQTTICRFEALQLSFKNMCKLKPLLNKWLEEADSSTGSPTSIDKIAAQGRKRKKRTSIEVSVKGALESHFLKCPKPSAQEITSLADNLQLEKEVVRVWFCNRRQKEKRMTPPGVPQTPEDVYSQVGNGHFLVDYLKDASLTGPSEPGDQRVTTTSSFHQVILAH.

Disordered regions lie at residues isoleucine 21 to valine 40, serine 100 to tryptophan 150, and asparagine 182 to aspartate 244. Residues proline 101–asparagine 121 are compositionally biased toward polar residues. Positions serine 210–alanine 225 are enriched in basic residues. Residues glutamate 238–aspartate 312 enclose the POU-specific domain. Phosphoserine is present on serine 317. Positions lysine 330 to threonine 389 form a DNA-binding region, homeobox.

It belongs to the POU transcription factor family. Class-3 subfamily. Predominantly expressed in the central nervous system.

It localises to the nucleus. Its function is as follows. Transcription factor that may play important roles in patterning the embryonic brain. The sequence is that of POU domain, class 3, transcription factor 3-B (pou3f3b) from Danio rerio (Zebrafish).